The sequence spans 132 residues: UPF0299 membrane protein YohJ (132 aa).

The next 4 membrane-spanning stretches (helical) occupy residues 7–27, 31–51, 63–83, and 93–113; these read IIWQYIRAFVLIYACLYAGIF, LLPITIPGSIIGMLILFVLLA, GCYVLIRYMALLFVPIGVGVM, and FGPVVVSCAISTLVVFVVVSW.

This sequence belongs to the UPF0299 family.

Its subcellular location is the cell inner membrane. In Salmonella agona (strain SL483), this protein is UPF0299 membrane protein YohJ.